Reading from the N-terminus, the 212-residue chain is 2-dehydro-3-deoxy-phosphogluconate aldolase (212 aa).

The active-site Proton acceptor is the glutamate 45. 3 residues coordinate pyruvate: arginine 49, threonine 73, and lysine 133. The active-site Schiff-base intermediate with substrate is the lysine 133.

The protein belongs to the KHG/KDPG aldolase family. As to quaternary structure, homotrimer.

The protein localises to the cytoplasm. It carries out the reaction 2-dehydro-3-deoxy-6-phospho-D-gluconate = D-glyceraldehyde 3-phosphate + pyruvate. Its pathway is carbohydrate acid metabolism; 2-dehydro-3-deoxy-D-gluconate degradation; D-glyceraldehyde 3-phosphate and pyruvate from 2-dehydro-3-deoxy-D-gluconate: step 2/2. Its function is as follows. Involved in the degradation of glucose via the Entner-Doudoroff pathway. Catalyzes the reversible, stereospecific retro-aldol cleavage of 2-keto-3-deoxy-6-phosphogluconate (KDPG) to pyruvate and D-glyceraldehyde-3-phosphate. The polypeptide is 2-dehydro-3-deoxy-phosphogluconate aldolase (eda) (Haemophilus influenzae (strain ATCC 51907 / DSM 11121 / KW20 / Rd)).